The following is a 276-amino-acid chain: Orotidine 5'-phosphate decarboxylase (276 aa).

Residue K93 is the Proton donor of the active site.

Belongs to the OMP decarboxylase family. Type 2 subfamily.

It carries out the reaction orotidine 5'-phosphate + H(+) = UMP + CO2. The protein operates within pyrimidine metabolism; UMP biosynthesis via de novo pathway; UMP from orotate: step 2/2. This chain is Orotidine 5'-phosphate decarboxylase, found in Halorubrum lacusprofundi (strain ATCC 49239 / DSM 5036 / JCM 8891 / ACAM 34).